The chain runs to 328 residues: Phosphate acyltransferase (328 aa).

This sequence belongs to the PlsX family. As to quaternary structure, homodimer. Probably interacts with PlsY.

It is found in the cytoplasm. The enzyme catalyses a fatty acyl-[ACP] + phosphate = an acyl phosphate + holo-[ACP]. The protein operates within lipid metabolism; phospholipid metabolism. Catalyzes the reversible formation of acyl-phosphate (acyl-PO(4)) from acyl-[acyl-carrier-protein] (acyl-ACP). This enzyme utilizes acyl-ACP as fatty acyl donor, but not acyl-CoA. The sequence is that of Phosphate acyltransferase from Staphylococcus aureus (strain USA300).